Here is a 396-residue protein sequence, read N- to C-terminus: Acetate kinase (396 aa).

Asparagine 7 lines the Mg(2+) pocket. Position 14 (lysine 14) interacts with ATP. Arginine 86 is a binding site for substrate. Aspartate 143 serves as the catalytic Proton donor/acceptor. ATP is bound by residues 203–207 (HLGNG), 277–279 (DMR), and 325–329 (GIGEH). Mg(2+) is bound at residue glutamate 380.

It belongs to the acetokinase family. As to quaternary structure, homodimer. It depends on Mg(2+) as a cofactor. Mn(2+) is required as a cofactor.

It is found in the cytoplasm. It catalyses the reaction acetate + ATP = acetyl phosphate + ADP. Its pathway is metabolic intermediate biosynthesis; acetyl-CoA biosynthesis; acetyl-CoA from acetate: step 1/2. Its function is as follows. Catalyzes the formation of acetyl phosphate from acetate and ATP. Can also catalyze the reverse reaction. In Sulfurovum sp. (strain NBC37-1), this protein is Acetate kinase.